The following is a 149-amino-acid chain: Urease accessory protein UreE (149 aa).

This sequence belongs to the UreE family.

Its subcellular location is the cytoplasm. Involved in urease metallocenter assembly. Binds nickel. Probably functions as a nickel donor during metallocenter assembly. This Corynebacterium efficiens (strain DSM 44549 / YS-314 / AJ 12310 / JCM 11189 / NBRC 100395) protein is Urease accessory protein UreE.